The primary structure comprises 226 residues: Late protein I226R (226 aa).

Positions methionine 1 to glycine 16 are cleaved as a signal peptide. N-linked (GlcNAc...) asparagine; by host glycans are attached at residues asparagine 142 and asparagine 164.

This sequence belongs to the asfivirus I226R family.

Its function is as follows. Plays a role in the inhibition of host NF-kappa-B and IRF3 signaling pathways. Mechanistically, promotes the degradation of host IKBKG through enhancing its ubiquitination leading to inhibition of both pathways. This chain is Late protein I226R, found in Ornithodoros (relapsing fever ticks).